Here is a 1031-residue protein sequence, read N- to C-terminus: Beta-galactosidase (1031 aa).

Positions 98 and 197 each coordinate substrate. Asp197 serves as a coordination point for Na(+). Positions 412, 414, and 457 each coordinate Mg(2+). Substrate contacts are provided by residues Glu457 and 533-536 (EYAH). Catalysis depends on Glu457, which acts as the Proton donor. Glu533 (nucleophile) is an active-site residue. Mg(2+) is bound at residue Asn593. Residues Phe597 and Asp600 each contribute to the Na(+) site. Residues Asp600 and Trp1005 each coordinate substrate.

This sequence belongs to the glycosyl hydrolase 2 family. Homotetramer. Requires Mg(2+) as cofactor. It depends on Na(+) as a cofactor.

It carries out the reaction Hydrolysis of terminal non-reducing beta-D-galactose residues in beta-D-galactosides.. This Oenococcus oeni (strain ATCC BAA-331 / PSU-1) protein is Beta-galactosidase.